The sequence spans 191 residues: Cytochrome c biogenesis ATP-binding export protein CcmA (191 aa).

The region spanning 6 to 189 is the ABC transporter domain; it reads LVATDIACRR…RVRTLAIRNF (184 aa). 38-45 is a binding site for ATP; that stretch reads GANGIGKS.

Belongs to the ABC transporter superfamily. CcmA exporter (TC 3.A.1.107) family. As to quaternary structure, the complex is composed of two ATP-binding proteins (CcmA) and two transmembrane proteins (CcmB).

It localises to the cell inner membrane. The enzyme catalyses heme b(in) + ATP + H2O = heme b(out) + ADP + phosphate + H(+). Part of the ABC transporter complex CcmAB involved in the biogenesis of c-type cytochromes; once thought to export heme, this seems not to be the case, but its exact role is uncertain. Responsible for energy coupling to the transport system. The chain is Cytochrome c biogenesis ATP-binding export protein CcmA from Novosphingobium aromaticivorans (strain ATCC 700278 / DSM 12444 / CCUG 56034 / CIP 105152 / NBRC 16084 / F199).